Consider the following 180-residue polypeptide: Adenine phosphoribosyltransferase (180 aa).

S2 carries the post-translational modification N-acetylserine. S4, S15, and S30 each carry phosphoserine. Position 60 is a phosphotyrosine (Y60). S66 carries the phosphoserine modification. K114 carries the post-translational modification N6-acetyllysine. T135 is modified (phosphothreonine).

It belongs to the purine/pyrimidine phosphoribosyltransferase family. As to quaternary structure, homodimer.

The protein localises to the cytoplasm. It catalyses the reaction AMP + diphosphate = 5-phospho-alpha-D-ribose 1-diphosphate + adenine. The protein operates within purine metabolism; AMP biosynthesis via salvage pathway; AMP from adenine: step 1/1. Its function is as follows. Catalyzes a salvage reaction resulting in the formation of AMP, that is energically less costly than de novo synthesis. The sequence is that of Adenine phosphoribosyltransferase from Mus pahari (Gairdner's shrew-mouse).